An 86-amino-acid polypeptide reads, in one-letter code: Short neurotoxin homolog NTL4 (86 aa).

Residues 1-21 (MKTLLLTLVVVTIICLDLGYT) form the signal peptide. Cystine bridges form between C24-C45, C38-C63, C67-C78, and C79-C84.

It belongs to the three-finger toxin family. Short-chain subfamily. Orphan group III sub-subfamily. In terms of tissue distribution, expressed by the venom gland.

Its subcellular location is the secreted. The protein is Short neurotoxin homolog NTL4 of Bungarus multicinctus (Many-banded krait).